A 78-amino-acid chain; its full sequence is Putative membrane protein insertion efficiency factor (78 aa).

It belongs to the UPF0161 family.

The protein resides in the cell inner membrane. Functionally, could be involved in insertion of integral membrane proteins into the membrane. The sequence is that of Putative membrane protein insertion efficiency factor from Prochlorococcus marinus subsp. pastoris (strain CCMP1986 / NIES-2087 / MED4).